Reading from the N-terminus, the 348-residue chain is Peroxidase 40 (348 aa).

Positions methionine 1–serine 21 are cleaved as a signal peptide. Residue asparagine 26 is glycosylated (N-linked (GlcNAc...) asparagine). Cystine bridges form between cysteine 59–cysteine 139, cysteine 92–cysteine 97, cysteine 145–cysteine 344, and cysteine 224–cysteine 256. The Proton acceptor role is filled by histidine 90. Ca(2+)-binding residues include aspartate 91, valine 94, glycine 96, aspartate 98, and serine 100. The segment at glycine 170–proline 189 is disordered. The span at alanine 177–proline 189 shows a compositional bias: polar residues. Proline 187 is a substrate binding site. N-linked (GlcNAc...) asparagine glycosylation occurs at asparagine 190. Histidine 217 lines the heme b pocket. Position 218 (threonine 218) interacts with Ca(2+). The Ca(2+) site is built by aspartate 269, threonine 272, and aspartate 277.

It belongs to the peroxidase family. Classical plant (class III) peroxidase subfamily. The cofactor is heme b. Requires Ca(2+) as cofactor.

The protein localises to the secreted. The catalysed reaction is 2 a phenolic donor + H2O2 = 2 a phenolic radical donor + 2 H2O. Its function is as follows. Removal of H(2)O(2), oxidation of toxic reductants, biosynthesis and degradation of lignin, suberization, auxin catabolism, response to environmental stresses such as wounding, pathogen attack and oxidative stress. These functions might be dependent on each isozyme/isoform in each plant tissue. This chain is Peroxidase 40 (PER40), found in Arabidopsis thaliana (Mouse-ear cress).